A 760-amino-acid polypeptide reads, in one-letter code: ATP-dependent zinc metalloprotease FtsH (760 aa).

Residues 1–5 (MNRKN) lie on the Cytoplasmic side of the membrane. A helical transmembrane segment spans residues 6–26 (VTRTITAIAVVVLLGWSFFYF). At 27–110 (SDDTRGYKPV…KVSTVVNQGS (84 aa)) the chain is on the extracellular side. A helical transmembrane segment spans residues 111 to 131 (ILGELLVYVLPLLLLVGLFVM). The Cytoplasmic portion of the chain corresponds to 132-760 (FSRMQGGARM…EVSRTKPAHG (629 aa)). Position 203–210 (203–210 (GPPGTGKT)) interacts with ATP. H425 serves as a coordination point for Zn(2+). E426 is an active-site residue. The Zn(2+) site is built by H429 and D501. Residues 616 to 760 (DFGGRIPSDK…EVSRTKPAHG (145 aa)) are disordered. The span at 650–669 (AFKAAIAQATQAAEAARSDA) shows a compositional bias: low complexity. A compositionally biased stretch (acidic residues) spans 740–750 (GSDESSAEQDD).

This sequence in the central section; belongs to the AAA ATPase family. In the C-terminal section; belongs to the peptidase M41 family. Homohexamer. Zn(2+) is required as a cofactor.

Its subcellular location is the cell membrane. Acts as a processive, ATP-dependent zinc metallopeptidase for both cytoplasmic and membrane proteins. Plays a role in the quality control of integral membrane proteins. This Mycobacterium tuberculosis (strain CDC 1551 / Oshkosh) protein is ATP-dependent zinc metalloprotease FtsH.